The sequence spans 293 residues: Small ribosomal subunit protein uS5 (293 aa).

The disordered stretch occupies residues Met1–Ala55. The residue at position 2 (Ala2) is an N-acetylalanine. The segment covering Ala7–Arg34 has biased composition (gly residues). 14 consecutive repeat copies span residues Gly9 to Pro11, Gly12 to Pro14, Gly15 to Pro17, Arg22 to Phe25, Arg26 to Phe29, Arg34 to Gly35, Arg36 to Gly37, Arg38 to Gly39, Arg40 to Gly41, Arg42 to Gly43, Arg44 to Gly45, Arg46 to Gly47, Arg48 to Gly49, and Arg51 to Gly52. The 3 X 3 AA tandem repeats of G-G-P stretch occupies residues Gly9–Pro17. The interval Arg22–Phe29 is 2 X 4 AA tandem repeats of R-G-G-F. A 9 X 2 AA tandem repeats of R-G region spans residues Arg34–Gly52. A compositionally biased stretch (basic residues) spans Gly35 to Arg51. Glycyl lysine isopeptide (Lys-Gly) (interchain with G-Cter in ubiquitin) cross-links involve residues Lys54 and Lys58. The S5 DRBM domain occupies Leu102–Val165. A Phosphothreonine modification is found at Thr252. N6-acetyllysine is present on Lys263. Ser264 carries the phosphoserine modification. Thr270 carries the post-translational modification Phosphothreonine. Lys275 carries the post-translational modification N6-acetyllysine; alternate. Residue Lys275 forms a Glycyl lysine isopeptide (Lys-Gly) (interchain with G-Cter in SUMO1); alternate linkage. Lys275 participates in a covalent cross-link: Glycyl lysine isopeptide (Lys-Gly) (interchain with G-Cter in SUMO2); alternate. Residue Lys275 forms a Glycyl lysine isopeptide (Lys-Gly) (interchain with G-Cter in ubiquitin); alternate linkage. Ser281 is subject to Phosphoserine.

This sequence belongs to the universal ribosomal protein uS5 family. Component of the small ribosomal subunit. Interacts with zinc finger protein ZNF277 (via zinc-finger domains); the interaction is direct; the interaction is extra-ribosomal. Interaction with ZNF277 competes with the binding of RPS2 to protein arginine methyltransferase PRMT3. In terms of processing, citrullinated by PADI4 in the Arg/Gly-rich region. Asymmetric arginine dimethylation by PRMT3 occurs at multiple sites in the Arg/Gly-rich region. Post-translationally, monoubiquitinated at Lys-54 and Lys-58 by RNF10 when a ribosome has stalled during translation, leading to its degradation by the proteasome. Deubiquitinated at Lys-54 and Lys-58 by USP10, preventing degradation by the proteasome and promoting 40S ribosome subunit recycling following ribosome dissociation.

It localises to the cytoplasm. The protein resides in the nucleus. The protein localises to the nucleolus. Its function is as follows. Component of the ribosome, a large ribonucleoprotein complex responsible for the synthesis of proteins in the cell. The small ribosomal subunit (SSU) binds messenger RNAs (mRNAs) and translates the encoded message by selecting cognate aminoacyl-transfer RNA (tRNA) molecules. The large subunit (LSU) contains the ribosomal catalytic site termed the peptidyl transferase center (PTC), which catalyzes the formation of peptide bonds, thereby polymerizing the amino acids delivered by tRNAs into a polypeptide chain. The nascent polypeptides leave the ribosome through a tunnel in the LSU and interact with protein factors that function in enzymatic processing, targeting, and the membrane insertion of nascent chains at the exit of the ribosomal tunnel. Plays a role in the assembly and function of the 40S ribosomal subunit. Mutations in this protein affects the control of translational fidelity. Involved in nucleolar processing of pre-18S ribosomal RNA and ribosome assembly. The chain is Small ribosomal subunit protein uS5 (Rps2) from Rattus norvegicus (Rat).